Here is a 414-residue protein sequence, read N- to C-terminus: Lysocardiolipin acyltransferase 1 (414 aa).

The next 2 membrane-spanning stretches (helical) occupy residues 47-67 (FILT…SPFL) and 86-106 (ATWL…KVII). Positions 123-128 (HRTRMD) match the HXXXXD motif motif. An N6-acetyllysine modification is found at K221. 2 helical membrane-spanning segments follow: residues 340–360 (LRVL…SPAM) and 362–382 (LLIY…VIFV).

Belongs to the 1-acyl-sn-glycerol-3-phosphate acyltransferase family. As to expression, expressed at higher level in heart, kidney and pancreas than in brain, spleen, liver, lung, small intestine and placenta.

The protein resides in the endoplasmic reticulum membrane. The enzyme catalyses a 1-acyl-sn-glycero-3-phosphate + an acyl-CoA = a 1,2-diacyl-sn-glycero-3-phosphate + CoA. It catalyses the reaction a 1-acyl-sn-glycero-3-phospho-(1D-myo-inositol) + an acyl-CoA = a 1,2-diacyl-sn-glycero-3-phospho-(1D-myo-inositol) + CoA. The catalysed reaction is 1-acyl-sn-glycero-3-phospho-(1'-sn-glycerol) + an acyl-CoA = a 1,2-diacyl-sn-glycero-3-phospho-(1'-sn-glycerol) + CoA. It carries out the reaction 1-hexadecanoyl-sn-glycero-3-phosphate + (9Z)-octadecenoyl-CoA = 1-hexadecanoyl-2-(9Z-octadecenoyl)-sn-glycero-3-phosphate + CoA. The enzyme catalyses 1-(9Z-octadecenoyl)-sn-glycero-3-phosphate + (9Z)-octadecenoyl-CoA = 1,2-di-(9Z-octadecenoyl)-sn-glycero-3-phosphate + CoA. It catalyses the reaction 1-(9Z,12Z)-octadecadienoyl-sn-glycero-3-phosphate + (9Z)-octadecenoyl-CoA = 1-(9Z,12Z)-octadecadienoyl-2-(9Z)-octadecenoyl-sn-glycero-3-phosphate + CoA. The catalysed reaction is 1-(9Z,12Z,15Z)-octadecatrienoyl-sn-glycero-3-phosphate + (9Z)-octadecenoyl-CoA = 1-(9Z,12Z,15Z)-octadecatrienoyl-2-(9Z)-octadecenoyl-sn-glycero-3-phosphate + CoA. It carries out the reaction 1-(9Z-octadecenoyl)-sn-glycero-3-phosphate + hexadecanoyl-CoA = 1-(9Z)-octadecenoyl-2-hexadecanoyl-sn-glycero-3-phosphate + CoA. The enzyme catalyses 1-(9Z-octadecenoyl)-sn-glycero-3-phosphate + octadecanoyl-CoA = 1-(9Z-octadecenoyl)-2-octadecanoyl-sn-glycero-3-phosphate + CoA. It catalyses the reaction 1-acyl-sn-glycero-3-phospho-(1'-sn-glycerol) + (9Z)-octadecenoyl-CoA = 1-acyl-2-(9Z-octadecenoyl)-sn-glycero-3-phospho-(1'-sn-glycerol) + CoA. The catalysed reaction is a 1-acyl-sn-glycero-3-phospho-(1D-myo-inositol) + (9Z)-octadecenoyl-CoA = a 1-acyl-2-(9Z-octadecenoyl)-sn-glycero-3-phospho-(1D-myo-inositol) + CoA. It carries out the reaction 1-hexadecanoyl-sn-glycero-3-phospho-(1D-myo-inositol) + hexadecanoyl-CoA = 1,2-dihexadecanoyl-sn-glycero-3-phospho-(1D-myo-inositol) + CoA. The enzyme catalyses 1-hexadecanoyl-sn-glycero-3-phospho-(1D-myo-inositol) + octadecanoyl-CoA = 1-hexadecanoyl-2-octadecanoyl-sn-glycero-3-phospho-(1D-myo-inositol) + CoA. It catalyses the reaction 1-hexadecanoyl-sn-glycero-3-phospho-(1D-myo-inositol) + (9Z)-octadecenoyl-CoA = 1-hexadecanoyl-2-(9Z-octadecenoyl)-sn-glycero-3-phospho-(1D-myo-inositol) + CoA. The catalysed reaction is 1-hexadecanoyl-sn-glycero-3-phospho-(1D-myo-inositol) + (9Z,12Z)-octadecadienoyl-CoA = 1-hexadecanoyl-2-(9Z,12Z-octadecadienoyl)-sn-glycero-3-phospho-(1D-myo-inositol) + CoA. It carries out the reaction 1-hexadecanoyl-sn-glycero-3-phospho-(1D-myo-inositol) + (5Z,8Z,11Z,14Z)-eicosatetraenoyl-CoA = 1-hexadecanoyl-2-(5Z,8Z,11Z,14Z-eicosatetraenoyl)-sn-glycero-3-phospho-D-myo-inositol + CoA. The enzyme catalyses 1-hexadecanoyl-sn-glycero-3-phospho-(1'-sn-glycerol) + hexadecanoyl-CoA = 1,2-dihexadecanoyl-sn-glycero-3-phospho-(1'-sn-glycerol) + CoA. It catalyses the reaction 1-hexadecanoyl-sn-glycero-3-phospho-(1'-sn-glycerol) + octadecanoyl-CoA = 1-hexadecanoyl-2-octadecanoyl-sn-glycero-3-phospho-(1'-sn-glycerol) + CoA. The catalysed reaction is 1-hexadecanoyl-sn-glycero-3-phospho-(1'-sn-glycerol) + (9Z)-octadecenoyl-CoA = 1-hexadecanoyl-2-(9Z-octadecenoyl)-sn-glycero-3-phospho-(1'-sn-glycerol) + CoA. It carries out the reaction 1-hexadecanoyl-sn-glycero-3-phospho-(1'-sn-glycerol) + (9Z,12Z)-octadecadienoyl-CoA = 1-hexadecanoyl-2-(9Z,12Z-octadecadienoyl)-sn-glycero-3-phospho-(1'-sn-glycerol) + CoA. The enzyme catalyses 1-tetradecanoyl-sn-glycero-3-phospho-(1'-sn-glycerol) + (9Z)-octadecenoyl-CoA = 1-tetradecanoyl-2-(9Z-octadecenoyl)-sn-glycero-3-phospho-(1'-sn-glycerol) + CoA. It catalyses the reaction 1-octadecanoyl-sn-glycero-3-phospho-(1'-sn-glycerol) + (9Z)-octadecenoyl-CoA = 1-octadecanoyl-2-(9Z-octadecenoyl)-sn-glycero-3-phospho-(1'-sn-glycerol) + CoA. The catalysed reaction is 1-(9Z-octadecenoyl)-sn-glycero-3-phospho-(1'-sn-glycerol) + (9Z)-octadecenoyl-CoA = 1,2-di-(9Z-octadecenoyl)-sn-glycero-3-phospho-(1'-sn-glycerol) + CoA. It carries out the reaction 1-hexadecanoyl-sn-glycero-3-phospho-(1D-myo-inositol) + dodecanoyl-CoA = 1-hexadecanoyl-2-dodecanoyl-sn-glycero-3-phospho-(1D-myo-inositol) + CoA. The enzyme catalyses 1',3'-bis-[1-acyl-sn-glycero-3-phospho]-glycerol + (9Z)-octadecenoyl-CoA = 1'-[1-acyl-2-(9Z)-octadecenoyl-sn-glycero-3-phospho],3'-[1-acyl,2-hydroxy-sn-glycero-3-phospho]-glycerol + CoA. It catalyses the reaction 1'-[1,2-diacyl-sn-glycero-3-phospho],3'-[1-acyl-sn-glycero-3-phospho]-glycerol + (9Z)-octadecenoyl-CoA = 1'-[1,2-diacyl-sn-glycero-3-phospho],3'-[1-acyl,2-(9Z)-octadecenoyl-sn-glycero-3-phospho]-glycerol + CoA. The catalysed reaction is 1'-[1,2-diacyl-sn-glycero-3-phospho],3'-[1-acyl-sn-glycero-3-phospho]-glycerol + (9Z,12Z)-octadecadienoyl-CoA = 1'-[1,2-diacyl-sn-glycero-3-phospho],3'-[1-acyl,2-(9Z,12Z)-octadecadienoyl-sn-glycero-3-phospho]-glycerol + CoA. It carries out the reaction 1'-[1,2-diacyl-sn-glycero-3-phospho],3'-[1-acyl-sn-glycero-3-phospho]-glycerol + dodecanoyl-CoA = 1'-[1,2-diacyl-sn-glycero-3-phospho],3'-[1-acyl,2-dodecanoyl-sn-glycero-3-phospho]-glycerol + CoA. The enzyme catalyses 1',3'-bis-[1-acyl-sn-glycero-3-phospho]-glycerol + dodecanoyl-CoA = 1'-[1-acyl-2-dodecanoyl-sn-glycero-3-phospho],3'-[1-acyl,2-hydroxy-sn-glycero-3-phospho]-glycerol + CoA. It catalyses the reaction a 1-acyl-sn-glycero-3-phosphate + (9Z)-octadecenoyl-CoA = a 1-acyl-2-(9Z-octadecenoyl)-sn-glycero-3-phosphate + CoA. The catalysed reaction is 1',3'-bis-[1-acyl-sn-glycero-3-phospho]-glycerol + (9Z,12Z)-octadecadienoyl-CoA = 1'-[1-acyl-2-(9Z,12Z)-octadecadienoyl-sn-glycero-3-phospho],3'-[1-acyl,2-hydroxy-sn-glycero-3-phospho]-glycerol + CoA. It carries out the reaction 1',3'-bis-[1-acyl-sn-glycero-3-phospho]-glycerol + hexadecanoyl-CoA = 1'-[1-acyl-2-hexadecanoyl-sn-glycero-3-phospho],3'-[1-acyl,2-hydroxy-sn-glycero-3-phospho]-glycerol + CoA. The enzyme catalyses 1',3'-bis-[1-acyl-sn-glycero-3-phospho]-glycerol + octadecanoyl-CoA = 1'-[1-acyl-2-octadecanoyl-sn-glycero-3-phospho],3'-[1-acyl,2-hydroxy-sn-glycero-3-phospho]-glycerol + CoA. It catalyses the reaction 1'-[1,2-diacyl-sn-glycero-3-phospho],3'-[1-acyl-sn-glycero-3-phospho]-glycerol + octanoyl-CoA = 1'-[1,2-diacyl-sn-glycero-3-phospho],3'-[1-acyl,2-octanoyl-sn-glycero-3-phospho]-glycerol + CoA. The catalysed reaction is 1',3'-bis-[1-acyl-sn-glycero-3-phospho]-glycerol + octanoyl-CoA = 1'-[1-acyl-2-octanoyl-sn-glycero-3-phospho],3'-[1-acyl,2-hydroxy-sn-glycero-3-phospho]-glycerol + CoA. It carries out the reaction 1'-[1,2-diacyl-sn-glycero-3-phospho],3'-[1-acyl-sn-glycero-3-phospho]-glycerol + hexadecanoyl-CoA = 1'-[1,2-diacyl-sn-glycero-3-phospho],3'-[1-acyl,2-hexadecanoyl-sn-glycero-3-phospho]-glycerol + CoA. The enzyme catalyses 1'-[1,2-diacyl-sn-glycero-3-phospho],3'-[1-acyl-sn-glycero-3-phospho]-glycerol + (5Z,8Z,11Z,14Z)-eicosatetraenoyl-CoA = 1'-[1,2-diacyl-sn-glycero-3-phospho],3'-[1-acyl,2-(5Z,8Z,11Z,14Z)-eicosatetraenoyl-sn-glycero-3-phospho]-glycerol + CoA. It catalyses the reaction 1',3'-bis-[1-acyl-sn-glycero-3-phospho]-glycerol + (5Z,8Z,11Z,14Z)-eicosatetraenoyl-CoA = 1'-[1-acyl-2-(5Z,8Z,11Z,14Z)-eicosatetraenoyl-sn-glycero-3-phospho],3'-[1-acyl,2-hydroxy-sn-glycero-3-phospho]-glycerol + CoA. The catalysed reaction is a 1-acyl-sn-glycero-3-phospho-(1D-myo-inositol) + octadecanoyl-CoA = a 1-acyl-2-octadecanoyl-sn-glycero-3-phospho-(1D-myo-inositol) + CoA. It carries out the reaction a 2-acyl-sn-glycero-3-phospho-D-myo-inositol + octadecanoyl-CoA = 1-octadecanoyl-2-acyl-sn-glycero-3-phospho-1D-myo-inositol + CoA. The protein operates within phospholipid metabolism; CDP-diacylglycerol biosynthesis; CDP-diacylglycerol from sn-glycerol 3-phosphate: step 2/3. Exhibits acyl-CoA:lysocardiolipin acyltransferase (ALCAT) activity; catalyzes the reacylation of lyso-cardiolipin to cardiolipin (CL), a key step in CL remodeling. Recognizes both monolysocardiolipin and dilysocardiolipin as substrates with a preference for linoleoyl-CoA and oleoyl-CoA as acyl donors. Also exhibits 1-acyl-sn-glycerol-3-phosphate acyltransferase activity (AGPAT) activity; converts 1-acyl-sn-glycerol-3- phosphate (lysophosphatidic acid or LPA) into 1,2-diacyl-sn-glycerol-3- phosphate (phosphatidic acid or PA) by incorporating an acyl moiety at the sn-2 position of the glycerol backbone. Possesses both lysophosphatidylinositol acyltransferase (LPIAT) and lysophosphatidylglycerol acyltransferase (LPGAT) activities. Required for establishment of the hematopoietic and endothelial lineages. The polypeptide is Lysocardiolipin acyltransferase 1 (LCLAT1) (Homo sapiens (Human)).